We begin with the raw amino-acid sequence, 110 residues long: Small ribosomal subunit protein bS16 (110 aa).

Positions 87 to 110 (ARNNPEKAVPRKERKAAAEAAAKK) are disordered.

This sequence belongs to the bacterial ribosomal protein bS16 family.

The sequence is that of Small ribosomal subunit protein bS16 from Rhodopseudomonas palustris (strain HaA2).